The chain runs to 390 residues: Protein phosphatase methylesterase 1 (390 aa).

The disordered stretch occupies residues 19–50 (FGLSSLSEDPDESESNSNYFSPTPQPPNELRT). Residues 100 to 332 (PIFICHHGAG…NLIIGQMQGK (233 aa)) form the AB hydrolase-1 domain. Active-site residues include Ser186, Asp213, and His346.

This sequence belongs to the AB hydrolase superfamily.

It carries out the reaction [phosphatase 2A protein]-C-terminal L-leucine methyl ester + H2O = [phosphatase 2A protein]-C-terminal L-leucine + methanol + H(+). Functionally, demethylates proteins that have been reversibly carboxymethylated. Demethylates the phosphatase PP2A catalytic subunit. This is Protein phosphatase methylesterase 1 (PPE1) from Debaryomyces hansenii (strain ATCC 36239 / CBS 767 / BCRC 21394 / JCM 1990 / NBRC 0083 / IGC 2968) (Yeast).